Here is a 331-residue protein sequence, read N- to C-terminus: Meiotically up-regulated gene 172 protein (331 aa).

Positions Ile72 to Arg166 form a coiled coil.

Belongs to the ADIP family.

Its subcellular location is the cytoplasm. Its function is as follows. Has a role in meiosis. The polypeptide is Meiotically up-regulated gene 172 protein (mug172) (Schizosaccharomyces pombe (strain 972 / ATCC 24843) (Fission yeast)).